Reading from the N-terminus, the 316-residue chain is uncharacterized protein (316 aa).

The tract at residues 285-316 (APEGDLGDIIEVDPSEPRSDPYRRLRTPPPGG) is disordered. Acidic residues predominate over residues 289–298 (DLGDIIEVDP).

Possibly necessary for replication. This is an uncharacterized protein from Halobacterium salinarum (Halobacterium halobium).